A 685-amino-acid polypeptide reads, in one-letter code: tRNA-dihydrouridine(47) synthase [NAD(P)(+)]-like (685 aa).

A compositionally biased stretch (low complexity) spans 1–12 (MAATAAAAAAAP). 3 disordered regions span residues 1-91 (MAAT…SSSH), 209-234 (AAND…PLCN), and 257-314 (LIDN…SCRT). The segment covering 13–29 (PADPPDSSPAASSPPRP) has biased composition (pro residues). The C3H1-type zinc finger occupies 87–118 (KSSSHLCIEVGKSGNVSSCKYGDSCRFSHDID). Basic and acidic residues-rich tracts occupy residues 209–221 (AAND…HDNL) and 273–284 (SKVESDEIDKHG). Positions 287–314 (TLNTNTESEDPNLSNGLEPSNNSSSCRT) are enriched in polar residues. FMN contacts are provided by residues 338 to 340 (PLT) and Q392. The active-site Proton donor is C423. Residues K462, H492, 525–527 (NGD), and 550–551 (AR) each bind FMN.

The protein belongs to the Dus family. Dus3 subfamily. It depends on FMN as a cofactor.

It carries out the reaction 5,6-dihydrouridine(47) in tRNA + NAD(+) = uridine(47) in tRNA + NADH + H(+). It catalyses the reaction 5,6-dihydrouridine(47) in tRNA + NADP(+) = uridine(47) in tRNA + NADPH + H(+). The enzyme catalyses a 5,6-dihydrouridine in mRNA + NAD(+) = a uridine in mRNA + NADH + H(+). The catalysed reaction is a 5,6-dihydrouridine in mRNA + NADP(+) = a uridine in mRNA + NADPH + H(+). Catalyzes the synthesis of dihydrouridine, a modified base found in the D-loop of most tRNAs. Specifically modifies U47 in cytoplasmic tRNAs. Catalyzes the synthesis of dihydrouridine in some mRNAs, thereby affecting their translation. The chain is tRNA-dihydrouridine(47) synthase [NAD(P)(+)]-like from Oryza sativa subsp. japonica (Rice).